The following is a 198-amino-acid chain: MSKVLYIKANIKLEGVSRTFQVSDHFIEEYKKQHPEDEVVVLDLYKENIDFLRPEDLEAMADINDETKKNTTFLKYAFQFAEADKYVIAAPMWNLGSPAILKAYFDYITITGITFHYTAEGPKGLLQNKKAVHIVARGGEYGNAPYEMGDRYVKTILGFLGVSDIQTIAIENLDIIGADVEAKVKEGKEKAGLVAKEF.

FMN is bound at residue 92-95; the sequence is MWNL.

Belongs to the azoreductase type 1 family. As to quaternary structure, homodimer. Requires FMN as cofactor.

It catalyses the reaction 2 a quinone + NADH + H(+) = 2 a 1,4-benzosemiquinone + NAD(+). The enzyme catalyses N,N-dimethyl-1,4-phenylenediamine + anthranilate + 2 NAD(+) = 2-(4-dimethylaminophenyl)diazenylbenzoate + 2 NADH + 2 H(+). Functionally, quinone reductase that provides resistance to thiol-specific stress caused by electrophilic quinones. Also exhibits azoreductase activity. Catalyzes the reductive cleavage of the azo bond in aromatic azo compounds to the corresponding amines. In Lachnoclostridium phytofermentans (strain ATCC 700394 / DSM 18823 / ISDg) (Clostridium phytofermentans), this protein is FMN-dependent NADH:quinone oxidoreductase.